The chain runs to 203 residues: Holliday junction branch migration complex subunit RuvA (203 aa).

The segment at 1–63 is domain I; it reads MIGKLSGKID…EEHIHLYGFL (63 aa). The interval 64-142 is domain II; sequence TIEEKNFFNL…KISTGAAIIN (79 aa). Residues 143 to 149 are flexible linker; that stretch reads DSLNIKN. Residues 150-203 are domain III; sequence ITSVASNEVIKALVNLGFSRFEAQNSVQGIVIQNPEISIDELIKTALKNRNAGL.

Belongs to the RuvA family. Homotetramer. Forms an RuvA(8)-RuvB(12)-Holliday junction (HJ) complex. HJ DNA is sandwiched between 2 RuvA tetramers; dsDNA enters through RuvA and exits via RuvB. An RuvB hexamer assembles on each DNA strand where it exits the tetramer. Each RuvB hexamer is contacted by two RuvA subunits (via domain III) on 2 adjacent RuvB subunits; this complex drives branch migration. In the full resolvosome a probable DNA-RuvA(4)-RuvB(12)-RuvC(2) complex forms which resolves the HJ.

It is found in the cytoplasm. Its function is as follows. The RuvA-RuvB-RuvC complex processes Holliday junction (HJ) DNA during genetic recombination and DNA repair, while the RuvA-RuvB complex plays an important role in the rescue of blocked DNA replication forks via replication fork reversal (RFR). RuvA specifically binds to HJ cruciform DNA, conferring on it an open structure. The RuvB hexamer acts as an ATP-dependent pump, pulling dsDNA into and through the RuvAB complex. HJ branch migration allows RuvC to scan DNA until it finds its consensus sequence, where it cleaves and resolves the cruciform DNA. The chain is Holliday junction branch migration complex subunit RuvA from Rickettsia akari (strain Hartford).